We begin with the raw amino-acid sequence, 82 residues long: Cytochrome b559 subunit alpha (82 aa).

Residues 22-36 (IIHAVALPAIFVAGF) traverse the membrane as a helical segment. Histidine 24 contributes to the heme binding site.

This sequence belongs to the PsbE/PsbF family. Heterodimer of an alpha subunit and a beta subunit. PSII is composed of 1 copy each of membrane proteins PsbA, PsbB, PsbC, PsbD, PsbE, PsbF, PsbH, PsbI, PsbJ, PsbK, PsbL, PsbM, PsbT, PsbX, PsbY, Psb30/Ycf12, peripheral proteins PsbO, CyanoQ (PsbQ), PsbU, PsbV and a large number of cofactors. It forms dimeric complexes. Heme b is required as a cofactor.

The protein localises to the cellular thylakoid membrane. Functionally, this b-type cytochrome is tightly associated with the reaction center of photosystem II (PSII). PSII is a light-driven water:plastoquinone oxidoreductase that uses light energy to abstract electrons from H(2)O, generating O(2) and a proton gradient subsequently used for ATP formation. It consists of a core antenna complex that captures photons, and an electron transfer chain that converts photonic excitation into a charge separation. The chain is Cytochrome b559 subunit alpha from Prochlorococcus marinus (strain NATL1A).